A 419-amino-acid polypeptide reads, in one-letter code: Hyaluronan synthase (419 aa).

A run of 5 helical transmembrane segments spans residues 8 to 28 (LIVL…MYLF), 33 to 53 (VGIY…LSFL), 318 to 338 (IVAL…VAIG), 345 to 365 (AIQL…IVAL), and 376 to 396 (PASF…LQPL).

This sequence belongs to the NodC/HAS family. It depends on Mg(2+) as a cofactor.

The protein localises to the cell membrane. It catalyses the reaction [hyaluronan](n) + UDP-N-acetyl-alpha-D-glucosamine = N-acetyl-beta-D-glucosaminyl-(1-&gt;4)-[hyaluronan](n) + UDP + H(+). The enzyme catalyses N-acetyl-beta-D-glucosaminyl-(1-&gt;4)-[hyaluronan](n) + UDP-alpha-D-glucuronate = [hyaluronan](n+1) + UDP + H(+). The protein operates within glycan biosynthesis; hyaluronan biosynthesis. Functionally, glycosaminoglycan synthesis. The hyaluronic acid capsule is involved in the pathogenicity of group A Streptococci; it may be the major virulence determinant. In Streptococcus pyogenes serotype M1, this protein is Hyaluronan synthase (hasA).